The chain runs to 591 residues: Eukaryotic translation initiation factor 3 subunit D (591 aa).

The disordered stretch occupies residues 100–159; that stretch reads SGGNPDEDAAFRLVDGKPPPRPKFGPKWRFNPHHNRNQLPQRRDEEVEAKKRDAEKERAR. A compositionally biased stretch (basic residues) spans 123-135; the sequence is FGPKWRFNPHHNR. Positions 140-159 are enriched in basic and acidic residues; it reads QRRDEEVEAKKRDAEKERAR. The tract at residues 309-323 is RNA gate; that stretch reads QLDLLSVHETSQEPL. Residues 549 to 560 show a composition bias toward acidic residues; the sequence is DYVEEPLPEDEQ. Residues 549-591 form a disordered region; that stretch reads DYVEEPLPEDEQVQPTEENTEGAEASVAATKETEEKKADDAQA. The segment covering 579–591 has biased composition (basic and acidic residues); the sequence is KETEEKKADDAQA.

The protein belongs to the eIF-3 subunit D family. In terms of assembly, component of the eukaryotic translation initiation factor 3 (eIF-3) complex, which is composed of at least 13 different subunits.

The protein localises to the cytoplasm. In terms of biological role, mRNA cap-binding component of the eukaryotic translation initiation factor 3 (eIF-3) complex, which is involved in protein synthesis of a specialized repertoire of mRNAs and, together with other initiation factors, stimulates binding of mRNA and methionyl-tRNAi to the 40S ribosome. The eIF-3 complex specifically targets and initiates translation of a subset of mRNAs involved in cell proliferation. In the eIF-3 complex, eif3d specifically recognizes and binds the 7-methylguanosine cap of a subset of mRNAs. In Arabidopsis thaliana (Mouse-ear cress), this protein is Eukaryotic translation initiation factor 3 subunit D (TIF3D1).